The sequence spans 209 residues: Uracil phosphoribosyltransferase (209 aa).

Residues arginine 79, arginine 104, and 131 to 139 contribute to the 5-phospho-alpha-D-ribose 1-diphosphate site; that span reads DPMLATGGS. Residues isoleucine 194 and 199 to 201 each bind uracil; that span reads GDA. 5-phospho-alpha-D-ribose 1-diphosphate is bound at residue aspartate 200.

Belongs to the UPRTase family. Mg(2+) serves as cofactor.

It carries out the reaction UMP + diphosphate = 5-phospho-alpha-D-ribose 1-diphosphate + uracil. It functions in the pathway pyrimidine metabolism; UMP biosynthesis via salvage pathway; UMP from uracil: step 1/1. Allosterically activated by GTP. Functionally, catalyzes the conversion of uracil and 5-phospho-alpha-D-ribose 1-diphosphate (PRPP) to UMP and diphosphate. The polypeptide is Uracil phosphoribosyltransferase (Bacillus licheniformis (strain ATCC 14580 / DSM 13 / JCM 2505 / CCUG 7422 / NBRC 12200 / NCIMB 9375 / NCTC 10341 / NRRL NRS-1264 / Gibson 46)).